We begin with the raw amino-acid sequence, 282 residues long: Bis(5'-nucleosyl)-tetraphosphatase, symmetrical (282 aa).

It belongs to the Ap4A hydrolase family. Monomer.

The catalysed reaction is P(1),P(4)-bis(5'-adenosyl) tetraphosphate + H2O = 2 ADP + 2 H(+). Its function is as follows. Hydrolyzes diadenosine 5',5'''-P1,P4-tetraphosphate to yield ADP. The chain is Bis(5'-nucleosyl)-tetraphosphatase, symmetrical from Escherichia coli O157:H7.